The chain runs to 380 residues: Glycogenin-2 (380 aa).

UDP-binding residues include leucine 10, tyrosine 16, and arginine 95. Residues leucine 10, tyrosine 16, arginine 95, lysine 104, aspartate 120, alanine 121, aspartate 122, asparagine 158, threonine 159, aspartate 185, aspartate 188, and glutamine 189 each contribute to the UDP-alpha-D-glucose site. Residues aspartate 120, alanine 121, and aspartate 122 each contribute to the UDP site. Residue aspartate 120 coordinates Mn(2+). Aspartate 122 is a Mn(2+) binding site. Tyrosine 230 and tyrosine 232 each carry an O-linked (Glc...) tyrosine glycan. UDP-binding residues include histidine 249, glycine 252, and lysine 255. Histidine 249 provides a ligand contact to Mn(2+). UDP-alpha-D-glucose-binding residues include glycine 252 and lysine 255. The segment at 331–355 (SVDRNASQKSTAEKHDIEKPTSKPQ) is disordered. A compositionally biased stretch (basic and acidic residues) spans 341-351 (TAEKHDIEKPT). Residue tyrosine 367 is glycosylated (O-linked (Glc...) tyrosine).

This sequence belongs to the glycosyltransferase 8 family. Glycogenin subfamily. Interacts with glycogen synthase GSY2. Mn(2+) is required as a cofactor.

The protein localises to the cytoplasm. It localises to the vacuole. The catalysed reaction is L-tyrosyl-[glycogenin] + UDP-alpha-D-glucose = alpha-D-glucosyl-L-tyrosyl-[glycogenin] + UDP + H(+). It carries out the reaction [1,4-alpha-D-glucosyl](n)-L-tyrosyl-[glycogenin] + UDP-alpha-D-glucose = [1,4-alpha-D-glucosyl](n+1)-L-tyrosyl-[glycogenin] + UDP + H(+). In terms of biological role, self-glucosylating initiator of glycogen synthesis. It catalyzes the formation of a short alpha (1,4)-glucosyl chain covalently attached via a glucose 1-O-tyrosyl linkage to internal tyrosine residues and these chains act as primers for the elongation reaction catalyzed by glycogen synthase. Capable of transferring glucosyl residues to unbound acceptors such as free oligoglucans or oligoglucan derivatives. This Saccharomyces cerevisiae (strain ATCC 204508 / S288c) (Baker's yeast) protein is Glycogenin-2.